The sequence spans 168 residues: Xanthine-guanine phosphoribosyltransferase (168 aa).

5-phospho-alpha-D-ribose 1-diphosphate is bound by residues 43–44 and 102–110; these read RG and DDLVDTGAT. Residue aspartate 103 participates in Mg(2+) binding. Residues aspartate 106 and isoleucine 149 each coordinate guanine. Residues aspartate 106 and isoleucine 149 each contribute to the xanthine site. GMP-binding positions include 106–110 and 148–149; these read DTGAT and WI.

The protein belongs to the purine/pyrimidine phosphoribosyltransferase family. XGPT subfamily. As to quaternary structure, homotetramer. It depends on Mg(2+) as a cofactor.

It localises to the cell inner membrane. The catalysed reaction is GMP + diphosphate = guanine + 5-phospho-alpha-D-ribose 1-diphosphate. The enzyme catalyses XMP + diphosphate = xanthine + 5-phospho-alpha-D-ribose 1-diphosphate. It catalyses the reaction IMP + diphosphate = hypoxanthine + 5-phospho-alpha-D-ribose 1-diphosphate. It participates in purine metabolism; GMP biosynthesis via salvage pathway; GMP from guanine: step 1/1. It functions in the pathway purine metabolism; XMP biosynthesis via salvage pathway; XMP from xanthine: step 1/1. Its function is as follows. Purine salvage pathway enzyme that catalyzes the transfer of the ribosyl-5-phosphate group from 5-phospho-alpha-D-ribose 1-diphosphate (PRPP) to the N9 position of the 6-oxopurines guanine and xanthine to form the corresponding ribonucleotides GMP (guanosine 5'-monophosphate) and XMP (xanthosine 5'-monophosphate), with the release of PPi. To a lesser extent, also acts on hypoxanthine. The polypeptide is Xanthine-guanine phosphoribosyltransferase (Nitrobacter winogradskyi (strain ATCC 25391 / DSM 10237 / CIP 104748 / NCIMB 11846 / Nb-255)).